Consider the following 198-residue polypeptide: IMP cyclohydrolase (198 aa).

The protein belongs to the archaeal IMP cyclohydrolase family.

It catalyses the reaction IMP + H2O = 5-formamido-1-(5-phospho-D-ribosyl)imidazole-4-carboxamide. It functions in the pathway purine metabolism; IMP biosynthesis via de novo pathway; IMP from 5-formamido-1-(5-phospho-D-ribosyl)imidazole-4-carboxamide: step 1/1. Functionally, catalyzes the cyclization of 5-formylamidoimidazole-4-carboxamide ribonucleotide to IMP. In Methanopyrus kandleri (strain AV19 / DSM 6324 / JCM 9639 / NBRC 100938), this protein is IMP cyclohydrolase.